A 276-amino-acid chain; its full sequence is 2-dehydro-3-deoxyphosphooctonate aldolase (276 aa).

The protein belongs to the KdsA family.

The protein localises to the cytoplasm. The catalysed reaction is D-arabinose 5-phosphate + phosphoenolpyruvate + H2O = 3-deoxy-alpha-D-manno-2-octulosonate-8-phosphate + phosphate. Its pathway is carbohydrate biosynthesis; 3-deoxy-D-manno-octulosonate biosynthesis; 3-deoxy-D-manno-octulosonate from D-ribulose 5-phosphate: step 2/3. It participates in bacterial outer membrane biogenesis; lipopolysaccharide biosynthesis. This Helicobacter pylori (strain HPAG1) protein is 2-dehydro-3-deoxyphosphooctonate aldolase.